A 417-amino-acid chain; its full sequence is Gamma-glutamyl phosphate reductase (417 aa).

The protein belongs to the gamma-glutamyl phosphate reductase family.

The protein localises to the cytoplasm. It catalyses the reaction L-glutamate 5-semialdehyde + phosphate + NADP(+) = L-glutamyl 5-phosphate + NADPH + H(+). Its pathway is amino-acid biosynthesis; L-proline biosynthesis; L-glutamate 5-semialdehyde from L-glutamate: step 2/2. In terms of biological role, catalyzes the NADPH-dependent reduction of L-glutamate 5-phosphate into L-glutamate 5-semialdehyde and phosphate. The product spontaneously undergoes cyclization to form 1-pyrroline-5-carboxylate. In Serratia marcescens, this protein is Gamma-glutamyl phosphate reductase.